The primary structure comprises 371 residues: Polygalacturonase (371 aa).

The signal sequence occupies residues 1-19 (MPSYLRNLVWATLAAGLVS). Residues 20 to 34 (AAPTPSRVSDLTKKS) constitute a propeptide that is removed on maturation. Cys38 and Cys53 are joined by a disulfide. PbH1 repeat units follow at residues 95–117 (GPLIKISGSDITVEAADGAVINA), 165–195 (SDNLIIDGVTIDNSDGDENGGHNTDGFDISE), 196–217 (STGVTIRNAVVKNQDDCIAINS), 218–238 (GQNIYFTGGTCSGGHGLSIGS), 247–268 (VKNVTITDSTVTDSANGVRIKT), 276–298 (VSDVTFSDITVSGITDYGIVIEQ), and 310–355 (TSGV…DITS). Asp210 functions as the Proton donor in the catalytic mechanism. Cys212 and Cys228 are joined by a disulfide. His232 is an active-site residue. A glycan (N-linked (GlcNAc...) asparagine) is linked at Asn249. 2 disulfides stabilise this stretch: Cys338-Cys343 and Cys362-Cys371.

The protein belongs to the glycosyl hydrolase 28 family.

It is found in the secreted. It catalyses the reaction (1,4-alpha-D-galacturonosyl)n+m + H2O = (1,4-alpha-D-galacturonosyl)n + (1,4-alpha-D-galacturonosyl)m.. In Penicillium janthinellum (Penicillium vitale), this protein is Polygalacturonase.